We begin with the raw amino-acid sequence, 268 residues long: Nickel import ATP-binding protein NikE (268 aa).

Positions 4 to 252 (LNVCGLSHHY…SSDAGRVLQN (249 aa)) constitute an ABC transporter domain. 45–52 (GRSGCGKS) is an ATP binding site.

Belongs to the ABC transporter superfamily. Nickel importer (TC 3.A.1.5.3) family. In terms of assembly, the complex is composed of two ATP-binding proteins (NikD and NikE), two transmembrane proteins (NikB and NikC) and a solute-binding protein (NikA).

It localises to the cell inner membrane. The enzyme catalyses Ni(2+)(out) + ATP + H2O = Ni(2+)(in) + ADP + phosphate + H(+). In terms of biological role, part of the ABC transporter complex NikABCDE involved in nickel import. Responsible for energy coupling to the transport system. In Shigella flexneri serotype 5b (strain 8401), this protein is Nickel import ATP-binding protein NikE.